Here is a 244-residue protein sequence, read N- to C-terminus: Uridylate kinase (244 aa).

Residue 15 to 18 (KLSG) participates in ATP binding. The interval 23–28 (GSEGFG) is involved in allosteric activation by GTP. Gly-57 is a UMP binding site. Residues Gly-58 and Arg-62 each coordinate ATP. UMP-binding positions include Asp-77 and 138 to 145 (TGNPFFTT). 3 residues coordinate ATP: Thr-165, Phe-171, and Asp-174.

This sequence belongs to the UMP kinase family. Homohexamer.

The protein localises to the cytoplasm. The enzyme catalyses UMP + ATP = UDP + ADP. The protein operates within pyrimidine metabolism; CTP biosynthesis via de novo pathway; UDP from UMP (UMPK route): step 1/1. With respect to regulation, allosterically activated by GTP. Inhibited by UTP. In terms of biological role, catalyzes the reversible phosphorylation of UMP to UDP. This Aeromonas hydrophila subsp. hydrophila (strain ATCC 7966 / DSM 30187 / BCRC 13018 / CCUG 14551 / JCM 1027 / KCTC 2358 / NCIMB 9240 / NCTC 8049) protein is Uridylate kinase.